We begin with the raw amino-acid sequence, 156 residues long: 6,7-dimethyl-8-ribityllumazine synthase (156 aa).

Residues F22, 57–59, and 81–83 each bind 5-amino-6-(D-ribitylamino)uracil; these read AVE and CVI. 86–87 serves as a coordination point for (2S)-2-hydroxy-3-oxobutyl phosphate; sequence GT. Residue H89 is the Proton donor of the active site. Residue F114 coordinates 5-amino-6-(D-ribitylamino)uracil. (2S)-2-hydroxy-3-oxobutyl phosphate is bound at residue R128.

The protein belongs to the DMRL synthase family. In terms of assembly, forms an icosahedral capsid composed of 60 subunits, arranged as a dodecamer of pentamers.

The enzyme catalyses (2S)-2-hydroxy-3-oxobutyl phosphate + 5-amino-6-(D-ribitylamino)uracil = 6,7-dimethyl-8-(1-D-ribityl)lumazine + phosphate + 2 H2O + H(+). The protein operates within cofactor biosynthesis; riboflavin biosynthesis; riboflavin from 2-hydroxy-3-oxobutyl phosphate and 5-amino-6-(D-ribitylamino)uracil: step 1/2. In terms of biological role, catalyzes the formation of 6,7-dimethyl-8-ribityllumazine by condensation of 5-amino-6-(D-ribitylamino)uracil with 3,4-dihydroxy-2-butanone 4-phosphate. This is the penultimate step in the biosynthesis of riboflavin. The protein is 6,7-dimethyl-8-ribityllumazine synthase of Vibrio cholerae serotype O1 (strain ATCC 39315 / El Tor Inaba N16961).